The following is a 206-amino-acid chain: Ribosomal RNA small subunit methyltransferase G (206 aa).

Residues Gly74, Leu79, 125-126 (VE), and Arg140 each bind S-adenosyl-L-methionine.

Belongs to the methyltransferase superfamily. RNA methyltransferase RsmG family.

It localises to the cytoplasm. It catalyses the reaction guanosine(527) in 16S rRNA + S-adenosyl-L-methionine = N(7)-methylguanosine(527) in 16S rRNA + S-adenosyl-L-homocysteine. In terms of biological role, specifically methylates the N7 position of guanine in position 527 of 16S rRNA. This is Ribosomal RNA small subunit methyltransferase G from Shewanella amazonensis (strain ATCC BAA-1098 / SB2B).